A 131-amino-acid chain; its full sequence is Arsenate reductase (131 aa).

Active-site nucleophile residues include cysteine 10, cysteine 82, and cysteine 89. 2 disulfide bridges follow: cysteine 10–cysteine 82 and cysteine 82–cysteine 89.

The protein belongs to the low molecular weight phosphotyrosine protein phosphatase family. Thioredoxin-coupled ArsC subfamily.

The protein resides in the cytoplasm. It carries out the reaction arsenate + [thioredoxin]-dithiol + H(+) = arsenite + [thioredoxin]-disulfide + H2O. Catalyzes the reduction of arsenate [As(V)] to arsenite [As(III)]. This is Arsenate reductase from Staphylococcus xylosus.